We begin with the raw amino-acid sequence, 109 residues long: Nucleoid-associated protein MADE_1013280 (109 aa).

Residues 86–109 (TSKEKMGDVTGGMPLPPGFKMPGF) are disordered. Positions 99–109 (PLPPGFKMPGF) are enriched in pro residues.

It belongs to the YbaB/EbfC family. As to quaternary structure, homodimer.

It localises to the cytoplasm. The protein resides in the nucleoid. Its function is as follows. Binds to DNA and alters its conformation. May be involved in regulation of gene expression, nucleoid organization and DNA protection. The sequence is that of Nucleoid-associated protein MADE_1013280 from Alteromonas mediterranea (strain DSM 17117 / CIP 110805 / LMG 28347 / Deep ecotype).